A 232-amino-acid polypeptide reads, in one-letter code: 7-cyano-7-deazaguanine synthase (232 aa).

7–17 (CSGGLDSVSLA) serves as a coordination point for ATP. The Zn(2+) site is built by cysteine 185, cysteine 193, cysteine 196, and cysteine 199.

Belongs to the QueC family. Zn(2+) serves as cofactor.

The enzyme catalyses 7-carboxy-7-deazaguanine + NH4(+) + ATP = 7-cyano-7-deazaguanine + ADP + phosphate + H2O + H(+). It participates in purine metabolism; 7-cyano-7-deazaguanine biosynthesis. Catalyzes the ATP-dependent conversion of 7-carboxy-7-deazaguanine (CDG) to 7-cyano-7-deazaguanine (preQ(0)). The polypeptide is 7-cyano-7-deazaguanine synthase (Brucella anthropi (strain ATCC 49188 / DSM 6882 / CCUG 24695 / JCM 21032 / LMG 3331 / NBRC 15819 / NCTC 12168 / Alc 37) (Ochrobactrum anthropi)).